Here is a 274-residue protein sequence, read N- to C-terminus: MSRPILVFDSGIGGLSVLAEIRKSLPHSDYCYLFDNARLPYGELEEQVLIAGCVALVCDLVARTNAMIVVVACNTASTVVLPALRANLSIPVVGVVPAIKPAAQMSKSKRIGLLATPGTVKRHYTHELISQFADDCHVELFGCSELVMMAEQKIATGEMDMHRLADLLAPVVAAQLDVLVLGCTHFPMIQAELQQVLGAGVTLMDSGAAIAKRVVTLLTQQNLIVEQRRVTNEREALGQSVMQAFYTKAEISEGLTTTLIDCGFSTIERITTTN.

Substrate contacts are provided by residues 9–10 (DS) and 41–42 (YG). The Proton donor/acceptor role is filled by cysteine 73. 74-75 (NT) lines the substrate pocket. The active-site Proton donor/acceptor is cysteine 183. 184 to 185 (TH) contacts substrate.

It belongs to the aspartate/glutamate racemases family.

It catalyses the reaction L-glutamate = D-glutamate. It participates in cell wall biogenesis; peptidoglycan biosynthesis. In terms of biological role, provides the (R)-glutamate required for cell wall biosynthesis. This Shewanella baltica (strain OS195) protein is Glutamate racemase.